The sequence spans 450 residues: MTENEQIFWNRVLELAQSQLKQATYEFFVHDARLIKVDNHVATIFLDQMKELFWEKNLKDVILTAGFEVYNAQIAVDYVYEDNLMIEQQHQGQQGYTEQAFQQLPAVQSDLNPKYSFDNFIQGDENRWAVAASIAVANTPGTTYNPLFIWGGPGLGKTHLLNAIGNSVLLENPNARIKYITAENFINEFVVHIRLDTMDELKEKFRNLDLLLIDDIQSLAKKTLSGTQEEFFNTFNALHNNNKQIVLTSDRTPDHLNDLEDRLVTRFKWGLTVNITPPDFETRVAILTNKIQEYNFVFPQDTIEYLAGQFDSNVRDLEGALKDISLVANFKQIDTITVDIAAEAIRARKQDGPKMTVIPIEEIQAQVGKFYGVTVKEIKATKRTQDIVLARQVAMFLAREMTDNSLPKIGKEFGGRDHSTVLHAYNKIKNMIGQDESLRIEIETIKNKIK.

A domain I, interacts with DnaA modulators region spans residues 1–84 (MTENEQIFWN…AVDYVYEDNL (84 aa)). Residues 84 to 109 (LMIEQQHQGQQGYTEQAFQQLPAVQS) form a domain II region. Positions 110–328 (DLNPKYSFDN…GALKDISLVA (219 aa)) are domain III, AAA+ region. The ATP site is built by glycine 154, glycine 156, lysine 157, and threonine 158. Residues 329-450 (NFKQIDTITV…EIETIKNKIK (122 aa)) are domain IV, binds dsDNA.

It belongs to the DnaA family. In terms of assembly, oligomerizes as a right-handed, spiral filament on DNA at oriC.

It localises to the cytoplasm. Its function is as follows. Plays an essential role in the initiation and regulation of chromosomal replication. ATP-DnaA binds to the origin of replication (oriC) to initiate formation of the DNA replication initiation complex once per cell cycle. Binds the DnaA box (a 9 base pair repeat at the origin) and separates the double-stranded (ds)DNA. Forms a right-handed helical filament on oriC DNA; dsDNA binds to the exterior of the filament while single-stranded (ss)DNA is stabiized in the filament's interior. The ATP-DnaA-oriC complex binds and stabilizes one strand of the AT-rich DNA unwinding element (DUE), permitting loading of DNA polymerase. After initiation quickly degrades to an ADP-DnaA complex that is not apt for DNA replication. Binds acidic phospholipids. In Streptococcus equi subsp. zooepidemicus (strain H70), this protein is Chromosomal replication initiator protein DnaA.